A 51-amino-acid chain; its full sequence is Large ribosomal subunit protein eL39 (51 aa).

A disordered region spans residues 1 to 22 (MAAQKSFRIKQKMAKAKKQNRP). The segment covering 7–20 (FRIKQKMAKAKKQN) has biased composition (basic residues).

This sequence belongs to the eukaryotic ribosomal protein eL39 family. In terms of assembly, component of the large ribosomal subunit (LSU). Mature yeast ribosomes consist of a small (40S) and a large (60S) subunit. The 40S small subunit contains 1 molecule of ribosomal RNA (18S rRNA) and 33 different proteins (encoded by 57 genes). The large 60S subunit contains 3 rRNA molecules (25S, 5.8S and 5S rRNA) and 46 different proteins (encoded by 81 genes). eL39 interacts with YIH1.

Its subcellular location is the cytoplasm. In terms of biological role, component of the ribosome, a large ribonucleoprotein complex responsible for the synthesis of proteins in the cell. The small ribosomal subunit (SSU) binds messenger RNAs (mRNAs) and translates the encoded message by selecting cognate aminoacyl-transfer RNA (tRNA) molecules. The large subunit (LSU) contains the ribosomal catalytic site termed the peptidyl transferase center (PTC), which catalyzes the formation of peptide bonds, thereby polymerizing the amino acids delivered by tRNAs into a polypeptide chain. The nascent polypeptides leave the ribosome through a tunnel in the LSU and interact with protein factors that function in enzymatic processing, targeting, and the membrane insertion of nascent chains at the exit of the ribosomal tunnel. This is Large ribosomal subunit protein eL39 from Saccharomyces cerevisiae (strain ATCC 204508 / S288c) (Baker's yeast).